The following is a 217-amino-acid chain: Translation initiation factor 6 (217 aa).

It belongs to the eIF-6 family.

Its function is as follows. Binds to the 50S ribosomal subunit and prevents its association with the 30S ribosomal subunit to form the 70S initiation complex. The chain is Translation initiation factor 6 from Picrophilus torridus (strain ATCC 700027 / DSM 9790 / JCM 10055 / NBRC 100828 / KAW 2/3).